Here is a 544-residue protein sequence, read N- to C-terminus: Cytochrome P450 monooxygenase tenB (544 aa).

Residues 13 to 33 (LGYYEKVTGILGVVSIILLFW) traverse the membrane as a helical segment. A compositionally biased stretch (basic and acidic residues) spans 438–448 (FDPFRFSRASK). Residues 438–467 (FDPFRFSRASKDDDDDDDDDGRSTSSHTKD) form a disordered region. Cys-486 contacts heme.

The protein belongs to the cytochrome P450 family. Heme serves as cofactor.

The protein localises to the membrane. The protein operates within secondary metabolite biosynthesis. Cytochrome P450 monooxygenase; part of the gene cluster that mediates the biosynthesis of tenellin-type 2-pyridones, iron-chelating compounds involved in iron stress tolerance, competition with the natural competitor fungus Metarhizium robertsii and insect hosts infection. TenB catalyzes the selective N-hydroxylation of the 2-pyridone nitrogen of yield tellinin and 15-hydroxytellenin (15-HT), respectively. The pathway begins with the assembly of the polyketide-amino acid backbone by the hybrid PKS-NRPS tenS with the help of the enoyl reductase tenC. These enzymes catalyze the synthesis of the pyrrolidine-2-dione intermediates pretellinin A, 11-hydropretellenin A, 12-hydropretellenin A, 13-hydropretellenin A, 14-hydropretellenin A, 12-oxopretellenin A and prototellinin D. The cytochrome P450 monooxygenase tenA then catalyzes an oxidative ring expansion of pretenellin A and 14-hydropretellenin A to form the 2-pyridone core, leading to pretenellin B and pyridovericin, respectively. The cytochrome P450 monooxygenase tenB is then required for the selective N-hydroxylation of the 2-pyridone nitrogen of yield tellinin and 15-hydroxytellenin (15-HT), respectively. The UDP-glucosyltransferase GT1 and the methyltransferase MT1, located outside the tenS gene cluster, contribute to the stepwise glycosylation and methylation of 15-HT to obtain the glycoside pyridovericin-N-O-(4-O-methyl-beta-D-glucopyranoside) (PMGP). Additional related compounds such as 1-O-methyl-15-HT, (8Z)-1-O-methyl-15-HT, and O-methyltenellin A are also produced but the enzymes involved in their biosynthesis have still to be determined. This chain is Cytochrome P450 monooxygenase tenB, found in Beauveria bassiana (strain ARSEF 2860) (White muscardine disease fungus).